A 424-amino-acid polypeptide reads, in one-letter code: MFS-type transporter opdF (424 aa).

Positions 1 to 10 (MSDTSLEKGN) are enriched in basic and acidic residues. The interval 1 to 23 (MSDTSLEKGNEGPTAEAPKVAPP) is disordered. The next 5 helical transmembrane spans lie at 36-56 (VAGA…IALF), 102-122 (VPIA…SLST), 127-147 (LMLS…TPAM), 160-180 (IVGG…PLMV), and 187-207 (VGFG…LVFA). N-linked (GlcNAc...) asparagine glycosylation occurs at Asn-208. 6 consecutive transmembrane segments (helical) span residues 239-259 (LCVA…YIVV), 265-285 (GMST…SFFG), 299-319 (FNVM…LWLP), 329-349 (FAAL…VLIV), 364-384 (VLAF…AIAA), and 391-411 (TYTC…LAAL).

It belongs to the major facilitator superfamily. Monocarboxylate porter (TC 2.A.1.13) family.

The protein localises to the membrane. Functionally, MFS-type transporter; part of the gene cluster that mediates the biosynthesis of oxopyrrolidines, polyketide-amino acid hybrid compounds with feature structures of tetramic acid. This is MFS-type transporter opdF from Penicillium oxalicum (strain 114-2 / CGMCC 5302) (Penicillium decumbens).